A 60-amino-acid polypeptide reads, in one-letter code: Large ribosomal subunit protein eL37 (60 aa).

Residues C19, C22, C34, and C37 each contribute to the Zn(2+) site. The segment at 19 to 37 (CRRCGRISFHAQKKVCSSC) adopts a C4-type zinc-finger fold.

This sequence belongs to the eukaryotic ribosomal protein eL37 family. The cofactor is Zn(2+).

Functionally, binds to the 23S rRNA. The sequence is that of Large ribosomal subunit protein eL37 from Methanoregula boonei (strain DSM 21154 / JCM 14090 / 6A8).